Consider the following 68-residue polypeptide: MMSKLGVLLTICLLLFPLSVLPLDGDQPADQPAERMQDISAEQNPWFDPVKRCCNWPRCNVYLCGPCC.

The first 22 residues, 1-22 (MMSKLGVLLTICLLLFPLSVLP), serve as a signal peptide directing secretion. Positions 23–52 (LDGDQPADQPAERMQDISAEQNPWFDPVKR) are excised as a propeptide. 3 disulfide bridges follow: Cys53/Cys68, Cys54/Cys64, and Cys59/Cys67.

The protein belongs to the conotoxin M superfamily. In terms of tissue distribution, expressed by the venom duct.

The protein localises to the secreted. This chain is Conotoxin reg3.14, found in Conus regius (Crown cone).